A 134-amino-acid chain; its full sequence is MAKSPANNAAQRVRKKVRKNVSDGIAHVHASFNNTIITITDRQGNALSWASSGGQGFKGSRKSTPFAAQVASEVAGRAAIEQGIKNLDVEIKGPGPGRESSVRALGALGIRITSISDVTPVPHNGCRPQKRRRI.

This sequence belongs to the universal ribosomal protein uS11 family. As to quaternary structure, part of the 30S ribosomal subunit. Interacts with proteins S7 and S18. Binds to IF-3.

Its function is as follows. Located on the platform of the 30S subunit, it bridges several disparate RNA helices of the 16S rRNA. Forms part of the Shine-Dalgarno cleft in the 70S ribosome. In Paracidovorax citrulli (strain AAC00-1) (Acidovorax citrulli), this protein is Small ribosomal subunit protein uS11.